We begin with the raw amino-acid sequence, 469 residues long: Adenosylhomocysteinase (469 aa).

Substrate contacts are provided by Thr60, Asp135, and Glu195. Residue 196–198 (TTT) coordinates NAD(+). Positions 225 and 229 each coordinate substrate. Residues Asn230, 259–264 (GYGDVG), Glu282, Asn317, 338–340 (IGH), and Asn383 each bind NAD(+).

Belongs to the adenosylhomocysteinase family. Requires NAD(+) as cofactor.

The protein localises to the cytoplasm. The catalysed reaction is S-adenosyl-L-homocysteine + H2O = L-homocysteine + adenosine. It participates in amino-acid biosynthesis; L-homocysteine biosynthesis; L-homocysteine from S-adenosyl-L-homocysteine: step 1/1. May play a key role in the regulation of the intracellular concentration of adenosylhomocysteine. The protein is Adenosylhomocysteinase of Maricaulis maris (strain MCS10) (Caulobacter maris).